The following is a 187-amino-acid chain: Elongation factor P (187 aa).

This sequence belongs to the elongation factor P family.

It is found in the cytoplasm. It functions in the pathway protein biosynthesis; polypeptide chain elongation. Functionally, involved in peptide bond synthesis. Stimulates efficient translation and peptide-bond synthesis on native or reconstituted 70S ribosomes in vitro. Probably functions indirectly by altering the affinity of the ribosome for aminoacyl-tRNA, thus increasing their reactivity as acceptors for peptidyl transferase. The sequence is that of Elongation factor P from Parvibaculum lavamentivorans (strain DS-1 / DSM 13023 / NCIMB 13966).